The chain runs to 842 residues: Glucans biosynthesis glucosyltransferase H (842 aa).

7 helical membrane-spanning segments follow: residues 140-160, 194-214, 513-533, 570-590, 615-635, 656-676, and 680-700; these read ILLLLTLAQTVVATWYMKTIL, ILILFAVLFCWVSAGFWTALM, VFLTGVMSYLSAPLWFMFLAL, LFASTMVLLFLPKLLSIMLIW, VLLAPVRMLFHTVFVVSAFLG, FMRHGSQLLLGLVWAVGMAWL, and FLFWLAPIVFSLILSPFVSVV.

Belongs to the glycosyltransferase 2 family. OpgH subfamily.

It localises to the cell inner membrane. The protein operates within glycan metabolism; osmoregulated periplasmic glucan (OPG) biosynthesis. Involved in the biosynthesis of osmoregulated periplasmic glucans (OPGs). The sequence is that of Glucans biosynthesis glucosyltransferase H from Citrobacter koseri (strain ATCC BAA-895 / CDC 4225-83 / SGSC4696).